The following is a 474-amino-acid chain: Glutamate--tRNA ligase 1 (474 aa).

The 'HIGH' region signature appears at 11–21 (PSPTGFLHIGG). Positions 113–133 (TARAEGRAPRYDGRWRDRDPS) are enriched in basic and acidic residues. A disordered region spans residues 113 to 136 (TARAEGRAPRYDGRWRDRDPSEAP). The short motif at 240–244 (KLSKR) is the 'KMSKS' region element. Lys-243 serves as a coordination point for ATP.

Belongs to the class-I aminoacyl-tRNA synthetase family. Glutamate--tRNA ligase type 1 subfamily. Monomer.

The protein resides in the cytoplasm. It catalyses the reaction tRNA(Glu) + L-glutamate + ATP = L-glutamyl-tRNA(Glu) + AMP + diphosphate. Functionally, catalyzes the attachment of glutamate to tRNA(Glu) in a two-step reaction: glutamate is first activated by ATP to form Glu-AMP and then transferred to the acceptor end of tRNA(Glu). This chain is Glutamate--tRNA ligase 1, found in Methylorubrum extorquens (strain PA1) (Methylobacterium extorquens).